A 1013-amino-acid polypeptide reads, in one-letter code: Putative helicase mov-10-B.1 (1013 aa).

Polar residues-rich tracts occupy residues 91–103 (QWSR…QNHA) and 113–123 (RPSTTRVSDPS). Positions 91–129 (QWSRPYRSQQNHATPHLNDAISRPSTTRVSDPSSVPEPE) are disordered. 550-557 (GPPGTGKT) lines the ATP pocket. A DEAG box motif is present at residues 672 to 675 (DEAG).

This sequence belongs to the DNA2/NAM7 helicase family. SDE3 subfamily.

Its subcellular location is the cytoplasm. The protein resides in the P-body. It carries out the reaction ATP + H2O = ADP + phosphate + H(+). In terms of biological role, probable RNA helicase. Required for RNA-mediated gene silencing by the RNA-induced silencing complex (RISC). Required for both miRNA-mediated translational repression and miRNA-mediated cleavage of complementary mRNAs by RISC. The sequence is that of Putative helicase mov-10-B.1 (mov10b.1) from Danio rerio (Zebrafish).